The chain runs to 132 residues: Protein NrdI (132 aa).

It belongs to the NrdI family.

Functionally, probably involved in ribonucleotide reductase function. The polypeptide is Protein NrdI (Bartonella tribocorum (strain CIP 105476 / IBS 506)).